The chain runs to 173 residues: Shikimate kinase (173 aa).

14-19 contacts ATP; that stretch reads GAGKST. A Mg(2+)-binding site is contributed by serine 18. Substrate is bound by residues aspartate 36, arginine 60, and glycine 82. Residue arginine 120 participates in ATP binding. A substrate-binding site is contributed by arginine 140. Glutamine 157 lines the ATP pocket.

This sequence belongs to the shikimate kinase family. Monomer. The cofactor is Mg(2+).

It localises to the cytoplasm. It catalyses the reaction shikimate + ATP = 3-phosphoshikimate + ADP + H(+). It functions in the pathway metabolic intermediate biosynthesis; chorismate biosynthesis; chorismate from D-erythrose 4-phosphate and phosphoenolpyruvate: step 5/7. Functionally, catalyzes the specific phosphorylation of the 3-hydroxyl group of shikimic acid using ATP as a cosubstrate. This Buchnera aphidicola subsp. Acyrthosiphon pisum (strain APS) (Acyrthosiphon pisum symbiotic bacterium) protein is Shikimate kinase.